The chain runs to 778 residues: Probable glutamine--tRNA ligase (778 aa).

The span at 188–205 (LKPQTKANDKPKAAKPKA) shows a compositional bias: basic and acidic residues. The tract at residues 188–219 (LKPQTKANDKPKAAKPKAEVTPAAQTAEAASD) is disordered. The short motif at 273-283 (PEPNGILHIGH) is the 'HIGH' region element. Residues 274 to 276 (EPN) and 280 to 286 (HIGHAKA) contribute to the ATP site. L-glutamine contacts are provided by Asp-306 and Tyr-441. Residues Thr-460, 489-490 (RL), and 497-499 (VSK) contribute to the ATP site. The 'KMSKS' region signature appears at 496-500 (LVSKR).

The protein belongs to the class-I aminoacyl-tRNA synthetase family.

The catalysed reaction is tRNA(Gln) + L-glutamine + ATP = L-glutaminyl-tRNA(Gln) + AMP + diphosphate. This Drosophila melanogaster (Fruit fly) protein is Probable glutamine--tRNA ligase.